The sequence spans 129 residues: Glycine cleavage system H protein (129 aa).

The region spanning 23–105 is the Lipoyl-binding domain; sequence SAVVGITEHA…YGEGWLAKFS (83 aa). An N6-lipoyllysine modification is found at Lys-64.

Belongs to the GcvH family. The glycine cleavage system is composed of four proteins: P, T, L and H. (R)-lipoate serves as cofactor.

Functionally, the glycine cleavage system catalyzes the degradation of glycine. The H protein shuttles the methylamine group of glycine from the P protein to the T protein. This Herpetosiphon aurantiacus (strain ATCC 23779 / DSM 785 / 114-95) protein is Glycine cleavage system H protein.